Reading from the N-terminus, the 360-residue chain is UDP-N-acetylglucosamine--N-acetylmuramyl-(pentapeptide) pyrophosphoryl-undecaprenol N-acetylglucosamine transferase (360 aa).

UDP-N-acetyl-alpha-D-glucosamine contacts are provided by residues 16–18 (TGG), N128, R165, S191, I247, 266–271 (ALTVSE), and Q292.

The protein belongs to the glycosyltransferase 28 family. MurG subfamily.

The protein resides in the cell inner membrane. The enzyme catalyses di-trans,octa-cis-undecaprenyl diphospho-N-acetyl-alpha-D-muramoyl-L-alanyl-D-glutamyl-meso-2,6-diaminopimeloyl-D-alanyl-D-alanine + UDP-N-acetyl-alpha-D-glucosamine = di-trans,octa-cis-undecaprenyl diphospho-[N-acetyl-alpha-D-glucosaminyl-(1-&gt;4)]-N-acetyl-alpha-D-muramoyl-L-alanyl-D-glutamyl-meso-2,6-diaminopimeloyl-D-alanyl-D-alanine + UDP + H(+). Its pathway is cell wall biogenesis; peptidoglycan biosynthesis. Cell wall formation. Catalyzes the transfer of a GlcNAc subunit on undecaprenyl-pyrophosphoryl-MurNAc-pentapeptide (lipid intermediate I) to form undecaprenyl-pyrophosphoryl-MurNAc-(pentapeptide)GlcNAc (lipid intermediate II). This is UDP-N-acetylglucosamine--N-acetylmuramyl-(pentapeptide) pyrophosphoryl-undecaprenol N-acetylglucosamine transferase from Shewanella amazonensis (strain ATCC BAA-1098 / SB2B).